The sequence spans 99 residues: MPAISRDEVAHLARLSRLALTDAELDEFAGQLDSILSHVKVVTEVPAEDVPPMANPNAVTNVTRPDVIVPGLTPEQALSGAPAVEQDRFAVPQILGEGE.

This sequence belongs to the GatC family. As to quaternary structure, heterotrimer of A, B and C subunits.

It catalyses the reaction L-glutamyl-tRNA(Gln) + L-glutamine + ATP + H2O = L-glutaminyl-tRNA(Gln) + L-glutamate + ADP + phosphate + H(+). It carries out the reaction L-aspartyl-tRNA(Asn) + L-glutamine + ATP + H2O = L-asparaginyl-tRNA(Asn) + L-glutamate + ADP + phosphate + 2 H(+). Functionally, allows the formation of correctly charged Asn-tRNA(Asn) or Gln-tRNA(Gln) through the transamidation of misacylated Asp-tRNA(Asn) or Glu-tRNA(Gln) in organisms which lack either or both of asparaginyl-tRNA or glutaminyl-tRNA synthetases. The reaction takes place in the presence of glutamine and ATP through an activated phospho-Asp-tRNA(Asn) or phospho-Glu-tRNA(Gln). The sequence is that of Aspartyl/glutamyl-tRNA(Asn/Gln) amidotransferase subunit C from Rhodococcus opacus (strain B4).